The primary structure comprises 261 residues: Cytochrome c oxidase subunit 3 (261 aa).

Residues 1–15 (MTHQLHAYHMVKPSP) lie on the Mitochondrial matrix side of the membrane. A helical membrane pass occupies residues 16-34 (WPLTGALSAFLLTSGLIMW). Over 35–40 (FHFYST) the chain is Mitochondrial intermembrane. A helical transmembrane segment spans residues 41–66 (ALLTLGLLTNVLTMYQWWRDIIREST). Topologically, residues 67–72 (YQGHHT) are mitochondrial matrix. Residues 73-105 (TPVQKSLRYGMTLFIISEVFFFAGFFWAFYHSS) form a helical membrane-spanning segment. The Mitochondrial intermembrane segment spans residues 106 to 128 (LAPTPRLGCHWPPTGITPLNPLE). A helical membrane pass occupies residues 129–152 (VPLLNTSVLLASGVTITWAHHSLM). Residues 153-155 (NGN) are Mitochondrial matrix-facing. A helical transmembrane segment spans residues 156–183 (RKQTIQALLITILLGTYFTLVQISEYFE). At 184 to 190 (APFTISD) the chain is on the mitochondrial intermembrane side. The helical transmembrane segment at 191-223 (GIYGSTFFVATGFHGLHVIIGSTFLLICLIRQL) threads the bilayer. The Mitochondrial matrix segment spans residues 224 to 232 (FYHFTPSHH). Residues 233 to 256 (FGFEAAAWYWHFVDVIWLFLYISI) form a helical membrane-spanning segment. Residues 257–261 (YWWGS) are Mitochondrial intermembrane-facing.

It belongs to the cytochrome c oxidase subunit 3 family. Component of the cytochrome c oxidase (complex IV, CIV), a multisubunit enzyme composed of 14 subunits. The complex is composed of a catalytic core of 3 subunits MT-CO1, MT-CO2 and MT-CO3, encoded in the mitochondrial DNA, and 11 supernumerary subunits COX4I, COX5A, COX5B, COX6A, COX6B, COX6C, COX7A, COX7B, COX7C, COX8 and NDUFA4, which are encoded in the nuclear genome. The complex exists as a monomer or a dimer and forms supercomplexes (SCs) in the inner mitochondrial membrane with NADH-ubiquinone oxidoreductase (complex I, CI) and ubiquinol-cytochrome c oxidoreductase (cytochrome b-c1 complex, complex III, CIII), resulting in different assemblies (supercomplex SCI(1)III(2)IV(1) and megacomplex MCI(2)III(2)IV(2)).

It localises to the mitochondrion inner membrane. The catalysed reaction is 4 Fe(II)-[cytochrome c] + O2 + 8 H(+)(in) = 4 Fe(III)-[cytochrome c] + 2 H2O + 4 H(+)(out). Component of the cytochrome c oxidase, the last enzyme in the mitochondrial electron transport chain which drives oxidative phosphorylation. The respiratory chain contains 3 multisubunit complexes succinate dehydrogenase (complex II, CII), ubiquinol-cytochrome c oxidoreductase (cytochrome b-c1 complex, complex III, CIII) and cytochrome c oxidase (complex IV, CIV), that cooperate to transfer electrons derived from NADH and succinate to molecular oxygen, creating an electrochemical gradient over the inner membrane that drives transmembrane transport and the ATP synthase. Cytochrome c oxidase is the component of the respiratory chain that catalyzes the reduction of oxygen to water. Electrons originating from reduced cytochrome c in the intermembrane space (IMS) are transferred via the dinuclear copper A center (CU(A)) of subunit 2 and heme A of subunit 1 to the active site in subunit 1, a binuclear center (BNC) formed by heme A3 and copper B (CU(B)). The BNC reduces molecular oxygen to 2 water molecules using 4 electrons from cytochrome c in the IMS and 4 protons from the mitochondrial matrix. The sequence is that of Cytochrome c oxidase subunit 3 (MT-CO3) from Papio hamadryas (Hamadryas baboon).